A 641-amino-acid chain; its full sequence is WW domain-binding protein 11 (641 aa).

Over residues 1-11 (MGRRSTSSTKS) the composition is skewed to polar residues. A disordered region spans residues 1–37 (MGRRSTSSTKSGKFMNPTDQARKEARKRELKKNKKQR). Residues 1-45 (MGRRSTSSTKSGKFMNPTDQARKEARKRELKKNKKQRMMVRAAVL) are required for nuclear import. Lysine 13 is subject to N6-acetyllysine. Residues 28 to 37 (RELKKNKKQR) show a composition bias toward basic residues. Residues 75 to 133 (EKVLKDKRKKLRETFERILRLYEKENPDIYKELRKLEVEYEQKRAQLSQYFDAVKNAQH) adopt a coiled-coil conformation. Residue serine 181 is modified to Phosphoserine. A disordered region spans residues 188–213 (HGVPRLPPGRKPPGPPPGPPPPQVLQ). Arginine 192 is subject to Omega-N-methylarginine. Positions 192-210 (RLPPGRKPPGPPPGPPPPQ) are enriched in pro residues. Positions 217-221 (RKVGF) are interaction with PP1. Phosphotyrosine is present on tyrosine 236. The interval 236-550 (YSPELAQRGH…IQRPKADDAS (315 aa)) is disordered. At serine 237 the chain carries Phosphoserine. The segment covering 253–263 (SEDDGYPEDMD) has biased composition (acidic residues). Basic and acidic residues predominate over residues 276–304 (TDRSDAESDGDEFGHREDSERDNTEEKKS). Phosphoserine occurs at positions 279 and 283. Positions 306–310 (LSVRF) are interaction with PP1. The span at 351-365 (EFSEEEDADDSDDSE) shows a compositional bias: acidic residues. 3 positions are modified to phosphoserine: serine 353, serine 361, and serine 364. A compositionally biased stretch (basic and acidic residues) spans 366–380 (AEKQSQKQHKDDGHS). A compositionally biased stretch (low complexity) spans 381 to 404 (DSTAAASSQQQAPPQSAPASQIQA). Composition is skewed to pro residues over residues 405–447 (PPMP…PPGM), 456–504 (RLLP…PPRP), and 510–530 (PLVP…PLPN). The short motif at 455–466 (PRLLPPGPPPGR) is the PGR element. Residue lysine 557 forms a Glycyl lysine isopeptide (Lys-Gly) (interchain with G-Cter in SUMO2) linkage. Lysine 565 carries the N6-acetyllysine modification. Lysine 572 participates in a covalent cross-link: Glycyl lysine isopeptide (Lys-Gly) (interchain with G-Cter in SUMO2). The tract at residues 588 to 620 (ENKGATAVPQRRSEDDSAVPVAKAAPRSGPSVA) is disordered. Serine 600 is modified (phosphoserine). A required for nuclear export region spans residues 633 to 641 (FMKEMEGLL).

As to quaternary structure, interacts via the PGR motif with PQBP1 in the nucleus. Interacts with the WW domains of WBP4. Interacts with PPP1CA, PPP1CB and PPP1CC. As to expression, ubiquitously expressed, with highest levels in testis.

Its subcellular location is the nucleus. The protein localises to the cytoplasm. Its function is as follows. Activates pre-mRNA splicing. May inhibit PP1 phosphatase activity. This chain is WW domain-binding protein 11 (Wbp11), found in Mus musculus (Mouse).